Consider the following 221-residue polypeptide: Urease accessory protein UreF (221 aa).

The protein belongs to the UreF family. As to quaternary structure, ureD, UreF and UreG form a complex that acts as a GTP-hydrolysis-dependent molecular chaperone, activating the urease apoprotein by helping to assemble the nickel containing metallocenter of UreC. The UreE protein probably delivers the nickel.

The protein localises to the cytoplasm. In terms of biological role, required for maturation of urease via the functional incorporation of the urease nickel metallocenter. The sequence is that of Urease accessory protein UreF from Aliivibrio fischeri (strain ATCC 700601 / ES114) (Vibrio fischeri).